Here is a 573-residue protein sequence, read N- to C-terminus: Proline--tRNA ligase (573 aa).

Belongs to the class-II aminoacyl-tRNA synthetase family. ProS type 1 subfamily. Homodimer.

It is found in the cytoplasm. It catalyses the reaction tRNA(Pro) + L-proline + ATP = L-prolyl-tRNA(Pro) + AMP + diphosphate. Functionally, catalyzes the attachment of proline to tRNA(Pro) in a two-step reaction: proline is first activated by ATP to form Pro-AMP and then transferred to the acceptor end of tRNA(Pro). As ProRS can inadvertently accommodate and process non-cognate amino acids such as alanine and cysteine, to avoid such errors it has two additional distinct editing activities against alanine. One activity is designated as 'pretransfer' editing and involves the tRNA(Pro)-independent hydrolysis of activated Ala-AMP. The other activity is designated 'posttransfer' editing and involves deacylation of mischarged Ala-tRNA(Pro). The misacylated Cys-tRNA(Pro) is not edited by ProRS. The chain is Proline--tRNA ligase from Chromohalobacter salexigens (strain ATCC BAA-138 / DSM 3043 / CIP 106854 / NCIMB 13768 / 1H11).